The primary structure comprises 337 residues: Large ribosomal subunit protein uL3 (337 aa).

This sequence belongs to the universal ribosomal protein uL3 family. In terms of assembly, part of the 50S ribosomal subunit. Forms a cluster with proteins L14 and L24e.

In terms of biological role, one of the primary rRNA binding proteins, it binds directly near the 3'-end of the 23S rRNA, where it nucleates assembly of the 50S subunit. The sequence is that of Large ribosomal subunit protein uL3 from Methanospirillum hungatei JF-1 (strain ATCC 27890 / DSM 864 / NBRC 100397 / JF-1).